Reading from the N-terminus, the 92-residue chain is Probable Fe(2+)-trafficking protein (92 aa).

It belongs to the Fe(2+)-trafficking protein family.

In terms of biological role, could be a mediator in iron transactions between iron acquisition and iron-requiring processes, such as synthesis and/or repair of Fe-S clusters in biosynthetic enzymes. This Shewanella pealeana (strain ATCC 700345 / ANG-SQ1) protein is Probable Fe(2+)-trafficking protein.